The primary structure comprises 158 residues: Protein-export protein SecB (158 aa).

The protein belongs to the SecB family. Homotetramer, a dimer of dimers. One homotetramer interacts with 1 SecA dimer.

Its subcellular location is the cytoplasm. In terms of biological role, one of the proteins required for the normal export of preproteins out of the cell cytoplasm. It is a molecular chaperone that binds to a subset of precursor proteins, maintaining them in a translocation-competent state. It also specifically binds to its receptor SecA. This Photorhabdus laumondii subsp. laumondii (strain DSM 15139 / CIP 105565 / TT01) (Photorhabdus luminescens subsp. laumondii) protein is Protein-export protein SecB.